The following is a 461-amino-acid chain: Glucan endo-1,3-beta-glucosidase (461 aa).

An N-terminal signal peptide occupies residues 1–23; it reads MPLLILLMLLAAGAAGAESATPS. Residue E123 is the Proton donor of the active site. E265 acts as the Nucleophile in catalysis. The disordered stretch occupies residues 350–375; sequence GASVAPTPSPNPSPNPSPKPAPSGGG. Over residues 356–370 the composition is skewed to pro residues; it reads TPSPNPSPNPSPKPA. A disulfide bond links C378 and C439.

The protein belongs to the glycosyl hydrolase 17 family. In terms of processing, contains two additional disulfide bonds.

The catalysed reaction is Hydrolysis of (1-&gt;3)-beta-D-glucosidic linkages in (1-&gt;3)-beta-D-glucans.. Is thought to be an important plant defense-related product against fungal pathogens. The chain is Glucan endo-1,3-beta-glucosidase (GLC1) from Triticum aestivum (Wheat).